Consider the following 875-residue polypeptide: Alanine--tRNA ligase (875 aa).

Residues His-564, His-568, Cys-666, and His-670 each contribute to the Zn(2+) site.

This sequence belongs to the class-II aminoacyl-tRNA synthetase family. As to quaternary structure, homotetramer. The cofactor is Zn(2+).

Its subcellular location is the cytoplasm. It catalyses the reaction tRNA(Ala) + L-alanine + ATP = L-alanyl-tRNA(Ala) + AMP + diphosphate. In terms of biological role, catalyzes the attachment of alanine to tRNA(Ala) in a two-step reaction: alanine is first activated by ATP to form Ala-AMP and then transferred to the acceptor end of tRNA(Ala). Also edits incorrectly charged Ser-tRNA(Ala) and Gly-tRNA(Ala) via its editing domain. The polypeptide is Alanine--tRNA ligase (Klebsiella pneumoniae subsp. pneumoniae (strain ATCC 700721 / MGH 78578)).